The chain runs to 586 residues: Regulatory protein NPR3 (586 aa).

Position 10 is a phosphoserine (Ser10). A BTB domain is found at 60-135; it reads SDAEIIVDGV…IYTGRLKPFP (76 aa). The segment at 138–152 adopts a C2HC NPR-type zinc-finger fold; it reads VSTCVDPVCSHDCCR. Zn(2+) is bound by residues Cys141, Cys146, His148, and Cys151. 3 ANK repeats span residues 261-291, 293-320, and 324-353; these read ERIGKILKALDSDDVELVKLLLTESDITLDQ, NGLHYSVVYSDPKVVAEILALDMGDVNY, and RGYTVLHFAAMRREPSIIISLIDKGANASE. Residues 383-523 are salicylic acid-binding core (SBC); the sequence is ESSKARLCID…MAEYIDDDIL (141 aa). A salicylate-binding site is contributed by Arg428. The interval 554-586 is disordered; the sequence is YSKDKESKIARSCLSASSSPSSSSIRDDLHNTT. The span at 565–577 shows a compositional bias: low complexity; that stretch reads SCLSASSSPSSSS.

This sequence belongs to the plant 'ANKYRIN-BTB/POZ' family. 'NPR1-like' subfamily. As to quaternary structure, forms homodimers and heterodimers with NPR4 in the presence of salicylic acid (SA). Interacts with TGA2, TGA3, TGA5 and TGA6. Interacts with CUL3A, a core component of the cullin-RING ubiquitin ligases (CRL). Interacts with TGA2 in vivo in the nucleus. Binds to NPR1; this interaction is promoted by association with SA, probably due to conformational changes.

The protein localises to the nucleus. It participates in protein modification; protein ubiquitination. Salicylic acid (SA)-binding substrate-specific adapter of an E3 ubiquitin-protein ligase complex (CUL3-RBX1-BTB) which mediates the ubiquitination and subsequent proteasomal degradation of NPR1 in response to SA. Together with NPR4, acts as receptor of salicylic acid to monitor immunity in a NPR1-dependent manner and induce systemic acquired resistance (SAR). Involved in the regulation of basal defense responses against pathogens, and may be implicated in the cross-talk between the SA- and JA-dependent signaling pathways. In Arabidopsis thaliana (Mouse-ear cress), this protein is Regulatory protein NPR3.